The sequence spans 324 residues: Heparan sulfate 2-O-sulfotransferase hst-2 (324 aa).

At 1–6 (MLWKKR) the chain is on the cytoplasmic side. The helical; Signal-anchor for type II membrane protein transmembrane segment at 7–24 (KVLYFAGISVFILILLLL) threads the bilayer. Residues 25–324 (KLNSKPKANV…QYHFEKIKPS (300 aa)) are Lumenal-facing. N-linked (GlcNAc...) asparagine glycosylation is found at Asn75 and Asn94. Active-site residues include His107 and His109. Residue Asn161 is glycosylated (N-linked (GlcNAc...) asparagine). Disulfide bonds link Cys167/Cys175 and Cys188/Cys194.

This sequence belongs to the sulfotransferase 3 family. Homotrimer. Present in the hypodermis, muscle, distal tip cells (DTCs) and in neurons (at protein level).

Its subcellular location is the golgi apparatus membrane. In terms of biological role, catalyzes the transfer of sulfate to the C2-position of selected hexuronic acid residues within the maturing heparan sulfate (HS). Involved in cell adhesion and guidance by specifically modifying proteoglycans in the extracellular matrix and on the cell surface that are essential for axon migrations. The protein is Heparan sulfate 2-O-sulfotransferase hst-2 of Caenorhabditis elegans.